We begin with the raw amino-acid sequence, 901 residues long: Protein translocase subunit SecA (901 aa).

ATP-binding positions include Q87, 105 to 109 (GEGKT), and D512. Zn(2+) contacts are provided by C885, C887, C896, and H897.

The protein belongs to the SecA family. In terms of assembly, monomer and homodimer. Part of the essential Sec protein translocation apparatus which comprises SecA, SecYEG and auxiliary proteins SecDF-YajC and YidC. Zn(2+) serves as cofactor.

The protein localises to the cell inner membrane. The protein resides in the cytoplasm. The catalysed reaction is ATP + H2O + cellular proteinSide 1 = ADP + phosphate + cellular proteinSide 2.. In terms of biological role, part of the Sec protein translocase complex. Interacts with the SecYEG preprotein conducting channel. Has a central role in coupling the hydrolysis of ATP to the transfer of proteins into and across the cell membrane, serving both as a receptor for the preprotein-SecB complex and as an ATP-driven molecular motor driving the stepwise translocation of polypeptide chains across the membrane. The sequence is that of Protein translocase subunit SecA from Salmonella paratyphi B (strain ATCC BAA-1250 / SPB7).